The primary structure comprises 103 residues: Matrix Gla protein (103 aa).

Residues methionine 1–cysteine 19 form the signal peptide. Glutamate 21 is modified (4-carboxyglutamate). 3 positions are modified to phosphoserine: serine 22, serine 25, and serine 28. Residues arginine 51–arginine 97 enclose the Gla domain. A 4-carboxyglutamate mark is found at glutamate 56, glutamate 60, glutamate 67, and glutamate 71. Cysteine 73 and cysteine 79 are joined by a disulfide. Positions arginine 97–lysine 103 are cleaved as a propeptide — removed in mature form; probably by carboxypeptidase N.

The protein belongs to the osteocalcin/matrix Gla protein family. Post-translationally, requires vitamin K-dependent gamma-carboxylation for its function.

Its subcellular location is the secreted. Associates with the organic matrix of bone and cartilage. Thought to act as an inhibitor of bone formation. The polypeptide is Matrix Gla protein (MGP) (Homo sapiens (Human)).